The primary structure comprises 557 residues: 6-phosphofructo-2-kinase/fructose-2,6-bisphosphatase 2 (557 aa).

A compositionally biased stretch (low complexity) spans 1-16 (MSENSTFSTEDSSSSS). The interval 1 to 21 (MSENSTFSTEDSSSSSYKPHA) is disordered. Serine 2 carries the N-acetylserine modification. Positions 2 to 251 (SENSTFSTED…VYYLMNIHVH (250 aa)) are 6-phosphofructo-2-kinase. Serine 32 carries the post-translational modification Phosphoserine; by PKA. 48–56 (GLPARGKTY) is an ATP binding site. Beta-D-fructose 6-phosphate is bound by residues arginine 81 and arginine 105. Aspartate 131 is a catalytic residue. Threonine 133 and arginine 139 together coordinate beta-D-fructose 6-phosphate. Residue cysteine 161 is part of the active site. 170-175 (NILEVK) provides a ligand contact to ATP. The beta-D-fructose 6-phosphate site is built by lysine 175, arginine 196, and tyrosine 200. The tract at residues 252-557 (PRTIYLCRHG…PSMASLTLLS (306 aa)) is fructose-2,6-bisphosphatase. Arginine 259 provides a ligand contact to beta-D-fructose 2,6-bisphosphate. Histidine 260 (tele-phosphohistidine intermediate) is an active-site residue. The beta-D-fructose 2,6-bisphosphate site is built by asparagine 266 and glycine 272. Glutamate 329 (proton donor/acceptor) is an active-site residue. Beta-D-fructose 2,6-bisphosphate is bound by residues tyrosine 340, arginine 354, lysine 358, tyrosine 369, glutamine 395, and arginine 399. 351-354 (FALR) provides a ligand contact to ATP. ATP-binding positions include 395 to 399 (QAVMR) and tyrosine 431. A disordered region spans residues 449-495 (RDKPTHNFPKSQTPVRMRRNSFTPLSSSNTIRRPRNYSVGSRPLKPL). A compositionally biased stretch (polar residues) spans 456-479 (FPKSQTPVRMRRNSFTPLSSSNTI). Serine 469 is modified (phosphoserine). A Phosphothreonine modification is found at threonine 471. Threonine 478 bears the Phosphothreonine; by PKC mark. A phosphoserine mark is found at serine 486 and serine 496.

In the C-terminal section; belongs to the phosphoglycerate mutase family. Homodimer. Forms a heterodimer with PFKFB3. Phosphorylation by AMPK stimulates activity.

The catalysed reaction is beta-D-fructose 2,6-bisphosphate + H2O = beta-D-fructose 6-phosphate + phosphate. It catalyses the reaction beta-D-fructose 6-phosphate + ATP = beta-D-fructose 2,6-bisphosphate + ADP + H(+). Phosphorylation results in the activation of the kinase activity. In terms of biological role, synthesis and degradation of fructose 2,6-bisphosphate. This Rattus norvegicus (Rat) protein is 6-phosphofructo-2-kinase/fructose-2,6-bisphosphatase 2 (Pfkfb2).